Reading from the N-terminus, the 109-residue chain is Globin (109 aa).

A Globin domain is found at 3–109 (PLTAAEVSSL…IFPIAGIHAL (107 aa)).

Belongs to the globin family. In terms of assembly, monomer.

Its function is as follows. Oxygen binding protein. In Dicrocoelium dendriticum (Small liver fluke), this protein is Globin.